The following is a 405-amino-acid chain: Molybdopterin molybdenumtransferase 2 (405 aa).

The protein belongs to the MoeA family. Requires Mg(2+) as cofactor.

It catalyses the reaction adenylyl-molybdopterin + molybdate = Mo-molybdopterin + AMP + H(+). It functions in the pathway cofactor biosynthesis; molybdopterin biosynthesis. Functionally, catalyzes the insertion of molybdate into adenylated molybdopterin with the concomitant release of AMP. In Mycobacterium tuberculosis (strain CDC 1551 / Oshkosh), this protein is Molybdopterin molybdenumtransferase 2 (moaE2).